A 273-amino-acid polypeptide reads, in one-letter code: 4-hydroxy-tetrahydrodipicolinate reductase (273 aa).

Residues G12–M17 and E38 contribute to the NAD(+) site. Position 39 (R39) interacts with NADP(+). Residues G102–T104 and A126–F129 each bind NAD(+). The active-site Proton donor/acceptor is the H159. H160 lines the (S)-2,3,4,5-tetrahydrodipicolinate pocket. The active-site Proton donor is the K163. G169–T170 provides a ligand contact to (S)-2,3,4,5-tetrahydrodipicolinate.

It belongs to the DapB family. As to quaternary structure, homotetramer.

It localises to the cytoplasm. The catalysed reaction is (S)-2,3,4,5-tetrahydrodipicolinate + NAD(+) + H2O = (2S,4S)-4-hydroxy-2,3,4,5-tetrahydrodipicolinate + NADH + H(+). It catalyses the reaction (S)-2,3,4,5-tetrahydrodipicolinate + NADP(+) + H2O = (2S,4S)-4-hydroxy-2,3,4,5-tetrahydrodipicolinate + NADPH + H(+). Its pathway is amino-acid biosynthesis; L-lysine biosynthesis via DAP pathway; (S)-tetrahydrodipicolinate from L-aspartate: step 4/4. Catalyzes the conversion of 4-hydroxy-tetrahydrodipicolinate (HTPA) to tetrahydrodipicolinate. The sequence is that of 4-hydroxy-tetrahydrodipicolinate reductase from Shigella boydii serotype 18 (strain CDC 3083-94 / BS512).